Consider the following 3014-residue polypeptide: Genome polyprotein (3014 aa).

At serine 2 the chain carries N-acetylserine; by host. Residues serine 2–lysine 23 are interaction with STAT1. Positions serine 2 to proline 58 are interaction with EIF2AK2/PKR. The segment at serine 2–arginine 59 is interaction with DDX3X. Residues serine 2 to serine 75 are disordered. Over serine 2–asparagine 168 the chain is Cytoplasmic. Short sequence motifs (nuclear localization signal) lie at residues proline 5–arginine 13 and proline 38–lysine 43. The span at proline 7–asparagine 16 shows a compositional bias: basic residues. Residue serine 53 is modified to Phosphoserine; by host. 2 short sequence motifs (nuclear localization signal) span residues proline 58–proline 64 and proline 66–proline 71. Basic residues predominate over residues proline 58–threonine 72. A phosphoserine; by host mark is found at serine 99 and serine 116. Positions proline 112–alanine 152 are important for endoplasmic reticulum and mitochondrial localization. The interaction with APOA2 stretch occupies residues valine 122–proline 173. The segment at tyrosine 164–glycine 167 is important for lipid droplets localization. Residues leucine 169 to alanine 189 form a helical membrane-spanning segment. The propeptide at valine 178–alanine 191 is ER anchor for the core protein, removed in mature form by host signal peptidase. Residues serine 190–alanine 358 are Lumenal-facing. N-linked (GlcNAc...) asparagine; by host glycans are attached at residues asparagine 196, asparagine 209, and asparagine 234. The important for fusion stretch occupies residues leucine 265–arginine 296. A glycan (N-linked (GlcNAc...) asparagine; by host) is linked at asparagine 305. Residues alanine 359 to alanine 379 form a helical membrane-spanning segment. Over glycine 380–leucine 726 the chain is Lumenal. The tract at residues threonine 385–glutamine 412 is HVR1. Residues asparagine 417, asparagine 423, and asparagine 430 are each glycosylated (N-linked (GlcNAc...) (high mannose) asparagine; by host). Disulfide bonds link cysteine 429/cysteine 553, cysteine 452/cysteine 459, cysteine 487/cysteine 495, and cysteine 504/cysteine 509. Residue asparagine 448 is glycosylated (N-linked (GlcNAc...) asparagine; by host). Residues alanine 475–glycine 479 form an HVR2 region. The CD81-binding 1 stretch occupies residues serine 481–proline 494. Asparagine 533 is a glycosylation site (N-linked (GlcNAc...) asparagine; by host). Residues proline 545–glycine 552 form a CD81-binding 2 region. Asparagine 557 carries an N-linked (GlcNAc...) asparagine; by host glycan. Cysteines 565 and 570 form a disulfide. Asparagine 578 carries an N-linked (GlcNAc...) asparagine; by host glycan. Intrachain disulfides connect cysteine 582–cysteine 586, cysteine 598–cysteine 621, and cysteine 608–cysteine 645. Residues asparagine 624 and asparagine 646 are each glycosylated (N-linked (GlcNAc...) (high mannose) asparagine; by host). Cysteine 653 and cysteine 678 form a disulfide bridge. A PKR/eIF2-alpha phosphorylation homology domain (PePHD) region spans residues alanine 661–glutamine 672. Residues leucine 727 to alanine 747 traverse the membrane as a helical segment. Topologically, residues threonine 748 to alanine 758 are lumenal. Residues alanine 759 to valine 779 form a helical membrane-spanning segment. Residues lysine 780–leucine 783 are Cytoplasmic-facing. The chain crosses the membrane as a helical span at residues valine 784–arginine 804. The Lumenal segment spans residues proline 805–serine 814. The chain crosses the membrane as a helical span at residues aspartate 815–glycine 835. Over tyrosine 836–histidine 882 the chain is Cytoplasmic. A helical membrane pass occupies residues proline 883 to leucine 903. The Lumenal segment spans residues glutamine 904–leucine 929. One can recognise a Peptidase C18 domain in the interval glutamine 904–leucine 1027. The interval histidine 905–arginine 1207 is protease NS2-3. Cysteine 923 is lipidated: S-palmitoyl cysteine; by host. A helical transmembrane segment spans residues valine 930–isoleucine 950. The interaction with host SCPS1 stretch occupies residues valine 930–isoleucine 950. The Cytoplasmic segment spans residues tyrosine 951 to threonine 1658. Catalysis depends on for protease NS2 activity; shared with dimeric partner residues histidine 953, glutamate 973, and cysteine 994. One can recognise a Peptidase S29 domain in the interval alanine 1028–proline 1209. Catalysis depends on charge relay system; for serine protease NS3 activity residues histidine 1084 and aspartate 1108. Residues cysteine 1124 and cysteine 1126 each contribute to the Zn(2+) site. The active-site Charge relay system; for serine protease NS3 activity is serine 1166. Zn(2+)-binding residues include cysteine 1172 and histidine 1176. Residues proline 1218–isoleucine 1351 form the Helicase ATP-binding domain. Alanine 1231–serine 1238 lines the ATP pocket. Serine 1238 and glutamate 1318 together coordinate Mg(2+). The short motif at aspartate 1317 to histidine 1320 is the DECH box element. The 178-residue stretch at asparagine 1362–arginine 1539 folds into the Helicase C-terminal domain. The tract at residues glutamine 1487–isoleucine 1499 is RNA-binding. The helical transmembrane segment at serine 1659–glycine 1679 threads the bilayer. The segment at serine 1680–glycine 1691 is NS3-binding. Topologically, residues serine 1680–glutamine 1806 are cytoplasmic. The helical transmembrane segment at threonine 1807 to alanine 1827 threads the bilayer. Topologically, residues threonine 1828 to alanine 1829 are lumenal. A helical transmembrane segment spans residues phenylalanine 1830–isoleucine 1850. Position 1851 (aspartate 1851) is a topological domain, cytoplasmic. Residues isoleucine 1852 to glycine 1872 traverse the membrane as a helical segment. Residues glutamate 1873 to asparagine 1882 are Lumenal-facing. The helical transmembrane segment at leucine 1883–leucine 1903 threads the bilayer. Over arginine 1904 to cysteine 1973 the chain is Cytoplasmic. The S-palmitoyl cysteine; by host moiety is linked to residue cysteine 1973. Residues aspartate 1974 to glutamine 2003 lie within the membrane without spanning it. Over leucine 2004–arginine 2993 the chain is Cytoplasmic. The Zn(2+) site is built by cysteine 2012, cysteine 2030, cysteine 2032, and cysteine 2053. Positions glutamate 2121–alanine 2209 are FKBP8-binding. The transcriptional activation stretch occupies residues glutamate 2121–proline 2334. Positions proline 2136–proline 2140 are interaction with non-structural protein 4A. An interaction with host SKP2 region spans residues arginine 2190–glutamate 2441. A phosphoserine; by host mark is found at serine 2195, serine 2198, serine 2202, serine 2205, serine 2208, and serine 2211. Positions serine 2211–lysine 2250 are ISDR. The interaction with EIF2AK2/PKR stretch occupies residues serine 2211–phenylalanine 2276. The segment at lysine 2250–tyrosine 2307 is NS4B-binding. The segment at glutamate 2300–proline 2378 is V3. Disordered regions lie at residues cysteine 2315–valine 2342 and proline 2359–serine 2412. Residues proline 2316–leucine 2327 show a composition bias toward pro residues. The SH3-binding motif lies at proline 2323–proline 2326. The Nuclear localization signal motif lies at proline 2328–leucine 2337. Polar residues predominate over residues isoleucine 2361–aspartate 2375. Residues serine 2376–asparagine 2385 show a composition bias toward basic and acidic residues. Phosphoserine; by host is present on serine 2465. One can recognise a RdRp catalytic domain in the interval proline 2637–aspartate 2755. The Mg(2+) site is built by aspartate 2643, aspartate 2741, and aspartate 2742. The chain crosses the membrane as a helical span at residues asparagine 2994–arginine 3014.

This sequence belongs to the hepacivirus polyprotein family. As to quaternary structure, homooligomer. Interacts with E1 (via C-terminus). Interacts with the non-structural protein 5A. Interacts (via N-terminus) with host STAT1 (via SH2 domain); this interaction results in decreased STAT1 phosphorylation and ubiquitin-mediated proteasome-dependent STAT1 degradation, leading to decreased IFN-stimulated gene transcription. Interacts with host STAT3; this interaction constitutively activates STAT3. Interacts with host LTBR receptor. Interacts with host TNFRSF1A receptor and possibly induces apoptosis. Interacts with host HNRPK. Interacts with host YWHAE. Interacts with host UBE3A/E6AP. Interacts with host DDX3X. Interacts with host APOA2. Interacts with host RXRA protein. Interacts with host SP110 isoform 3/Sp110b; this interaction sequesters the transcriptional corepressor SP110 away from the nucleus. Interacts with host CREB3 nuclear transcription protein; this interaction triggers cell transformation. Interacts with host ACY3. Interacts with host C1QR1. Interacts with host RBM24; this interaction, which enhances the interaction of the mature core protein with 5'-UTR, may inhibit viral translation and favor replication. Interacts with host EIF2AK2/PKR; this interaction induces the autophosphorylation of EIF2AK2. Part of the viral assembly initiation complex composed of NS2, E1, E2, NS3, NS4A, NS5A and the mature core protein. Forms a heterodimer with envelope glycoprotein E2. Interacts with mature core protein. Interacts with protease NS2. The heterodimer E1/E2 interacts with host CLDN1; this interaction plays a role in viral entry into host cell. Interacts with host SPSB2 (via C-terminus). Part of the viral assembly initiation complex composed of NS2, E1, E2, NS3, NS4A, NS5A and the mature core protein. Interacts with host NEURL3; this interaction prevents E1 binding to glycoprotein E2. In terms of assembly, forms a heterodimer with envelope glycoprotein E1. Interacts with host CD81 and SCARB1 receptors; these interactions play a role in viral entry into host cell. Interacts with host EIF2AK2/PKR; this interaction inhibits EIF2AK2 and probably allows the virus to evade the innate immune response. Interacts with host CD209/DC-SIGN and CLEC4M/DC-SIGNR. Interact with host SPCS1; this interaction is essential for viral particle assembly. Interacts with protease NS2. The heterodimer E1/E2 interacts with host CLDN1; this interaction plays a role in viral entry into host cell. Part of the viral assembly initiation complex composed of NS2, E1, E2, NS3, NS4A, NS5A and the mature core protein. Interacts with host SLC3A2/4F2hc; the interaction may facilitate viral entry into host cell. Interacts with human PLSCR1. As to quaternary structure, homohexamer. Homoheptamer. Interacts with protease NS2. Homodimer. Interacts with host SPCS1; this interaction is essential for viral particle assembly. Interacts with envelope glycoprotein E1. Interacts with envelope glycoprotein E2. Interacts with viroporin p7. Interacts with serine protease/helicase NS3. Part of the replication complex composed of NS2, NS3, NS4A, NS4B, NS5A and the RNA-directed RNA polymerase embedded in an ER-derived membranous web. Part of the viral assembly initiation complex composed of NS2, E1, E2, NS3, NS4A, NS5A and the mature core protein. In terms of assembly, interacts with protease NS2. Interacts with non-structural protein 4A; this interaction stabilizes the folding of NS3 serine protease. NS3-NS4A interaction is essential for NS3 activation and allows membrane anchorage of the latter. NS3/NS4A complex also prevents phosphorylation of host IRF3, thus preventing the establishment of dsRNA induced antiviral state. Interacts with host MAVS; this interaction leads to the cleavage and inhibition of host MAVS. Interacts with host TICAM1; this interaction leads to the cleavage and inhibition of host TICAM1. Interacts with host TANK-binding kinase/TBK1; this interaction results in the inhibition of the association between TBK1 and IRF3, which leads to the inhibition of IRF3 activation. Interacts with host RBM24. Part of the replication complex composed of NS2, NS3, NS4A, NS4B, NS5A and the RNA-directed RNA polymerase embedded in an ER-derived membranous web. Part of the viral assembly initiation complex composed of NS2, E1, E2, NS3, NS4A, NS5A and the mature core protein. As to quaternary structure, interacts with NS3 serine protease; this interaction stabilizes the folding of NS3 serine protease. NS3-NS4A interaction is essential for NS3 activation and allows membrane anchorage of the latter. Interacts with non-structural protein 5A (via N-terminus). Part of the replication complex composed of NS2, NS3, NS4A, NS4B, NS5A and the RNA-directed RNA polymerase embedded in an ER-derived membranous web. Part of the viral assembly initiation complex composed of NS2, E1, E2, NS3, NS4A, NS5A and the mature core protein. Homomultimer. Interacts with non-structural protein NS5A. Interacts with host PLA2G4C; this interaction likely initiates the recruitment of replication complexes to lipid droplets. Interacts with host STING; this interaction disrupts the interaction between STING and TBK1 thereby suppressing the interferon signaling. Part of the replication complex composed of NS2, NS3, NS4A, NS4B, NS5A and the RNA-directed RNA polymerase embedded in an ER-derived membranous web. In terms of assembly, monomer. Homodimer; dimerization is required for RNA-binding. Interacts with the mature core protein. Interacts (via N-terminus) with non-structural protein 4A. Interacts with non-structural protein 4B. Interacts (via region D2) with RNA-directed RNA polymerase. Part of the viral assembly initiation complex composed of NS2, E1, E2, NS3, NS4A, NS5A and the mature core protein. Part of the replication complex composed of NS2, NS3, NS4A, NS4B, NS5A and the RNA-directed RNA polymerase embedded in an ER-derived membranous web. Interacts with host GRB2. Interacts with host BIN1. Interacts with host PIK3R1. Interacts with host SRCAP. Interacts with host FKBP8. Interacts (via C-terminus) with host VAPB (via MSP domain). Interacts with host EIF2AK2/PKR; this interaction leads to disruption of EIF2AK2 dimerization by NS5A and probably allows the virus to evade the innate immune response. Interacts (via N-terminus) with host PACSIN2 (via N-terminus); this interaction attenuates protein kinase C alpha-mediated phosphorylation of PACSIN2 by disrupting the interaction between PACSIN2 and PRKCA. Interacts (via N-terminus) with host SRC kinase (via SH2 domain). Interacts with most Src-family kinases. Interacts with host IFI27 and SKP2; promotes the ubiquitin-mediated proteasomal degradation of NS5A. Interacts with host GPS2. Interacts with host TNFRSF21; this interaction allows the modulation by the virus of JNK, p38 MAPK, STAT3, and Akt signaling pathways in a DR6-dependent manner. Interacts (via N-terminus) with host CIDEB (via N-terminus); this interaction seems to regulate the association of HCV particles with APOE. Interacts with host CHKA/Choline Kinase-alpha; CHKA bridges host PI4KA and NS5A and potentiates NS5A-stimulated PI4KA activity, which then facilitates the targeting of the ternary complex to the ER for viral replication. Interacts with host SPSB2 (via C-terminus); this interaction targets NS5A for ubiquitination and degradation. Interacts with host RAB18; this interaction may promote the association of NS5A and other replicase components with lipid droplets. Interacts (via region D2) with host PPIA/CYPA; the interaction stimulates RNA-binding ability of NS5A and is dependent on the peptidyl-prolyl cis-trans isomerase activity of PPIA/CYPA. Interacts with host TRIM14; this interaction induces the degradation of NS5A. As to quaternary structure, homooligomer. Interacts with non-structural protein 5A. Interacts with host VAPB. Interacts with host PRK2/PKN2. Interacts with host HNRNPA1 and SEPT6; these interactions facilitate viral replication. Part of the replication complex composed of NS2, NS3, NS4A, NS4B, NS5A and the RNA-directed RNA polymerase. Zn(2+) is required as a cofactor. It depends on Mg(2+) as a cofactor. In terms of processing, specific enzymatic cleavages in vivo yield mature proteins. The structural proteins, core, E1, E2 and p7 are produced by proteolytic processing by host signal peptidases. The core protein precursor is synthesized as a 23 kDa, which is retained in the ER membrane through the hydrophobic signal peptide. Cleavage by the signal peptidase releases the 21 kDa mature core protein. The cleavage of the core protein precursor occurs between aminoacids 176 and 188 but the exact cleavage site is not known. Some degraded forms of the core protein appear as well during the course of infection. The other proteins (p7, NS2, NS3, NS4A, NS4B, NS5A and NS5B) are cleaved by the viral proteases. Autoprocessing between NS2 and NS3 is mediated by the NS2 cysteine protease catalytic domain and regulated by the NS3 N-terminal domain. Post-translationally, phosphorylated by host PKC and PKA. Ubiquitinated; mediated by UBE3A and leading to core protein subsequent proteasomal degradation. In terms of processing, highly N-glycosylated. Post-translationally, palmitoylation is required for NS2/3 autoprocessing and E2 recruitment to membranes. Palmitoylated. This modification may play a role in its polymerization or in protein-protein interactions. In terms of processing, phosphorylated on serines in a basal form termed p56. p58 is a hyperphosphorylated form of p56. p56 and p58 coexist in the cell in roughly equivalent amounts. Hyperphosphorylation is dependent on the presence of NS4A. Host CSNK1A1/CKI-alpha or RPS6KB1 kinases may be responsible for NS5A phosphorylation. Post-translationally, tyrosine phosphorylation is essential for the interaction with host SRC. The N-terminus is phosphorylated by host PRK2/PKN2.

Its subcellular location is the host endoplasmic reticulum membrane. The protein localises to the host mitochondrion membrane. It is found in the virion. It localises to the host cytoplasm. The protein resides in the host nucleus. Its subcellular location is the host lipid droplet. The protein localises to the virion membrane. It is found in the host mitochondrion. It localises to the host cell membrane. The protein resides in the host perinuclear region. It carries out the reaction Hydrolysis of four peptide bonds in the viral precursor polyprotein, commonly with Asp or Glu in the P6 position, Cys or Thr in P1 and Ser or Ala in P1'.. The catalysed reaction is a ribonucleoside 5'-triphosphate + H2O = a ribonucleoside 5'-diphosphate + phosphate + H(+). The enzyme catalyses ATP + H2O = ADP + phosphate + H(+). It catalyses the reaction RNA(n) + a ribonucleoside 5'-triphosphate = RNA(n+1) + diphosphate. Inhibited by the antiviral drug hexamethylene amiloride. Inhibition by amantadine appears to be genotype-dependent. Also inhibited by long-alkyl-chain iminosugar derivatives. With respect to regulation, activity is up-regulated by PRK2/PKN2-mediated phosphorylation. Functionally, packages viral RNA to form a viral nucleocapsid, and promotes virion budding. Participates in the viral particle production as a result of its interaction with the non-structural protein 5A. Binds RNA and may function as a RNA chaperone to induce the RNA structural rearrangements taking place during virus replication. Modulates viral translation initiation by interacting with viral IRES and 40S ribosomal subunit. Affects various cell signaling pathways, host immunity and lipid metabolism. Prevents the establishment of cellular antiviral state by blocking the interferon-alpha/beta (IFN-alpha/beta) and IFN-gamma signaling pathways and by blocking the formation of phosphorylated STAT1 and promoting ubiquitin-mediated proteasome-dependent degradation of STAT1. Activates STAT3 leading to cellular transformation. Regulates the activity of cellular genes, including c-myc and c-fos. May repress the promoter of p53, and sequester CREB3 and SP110 isoform 3/Sp110b in the cytoplasm. Represses cell cycle negative regulating factor CDKN1A, thereby interrupting an important check point of normal cell cycle regulation. Targets transcription factors involved in the regulation of inflammatory responses and in the immune response: suppresses TNF-induced NF-kappa-B activation, and activates AP-1. Binds to dendritic cells (DCs) via C1QR1, resulting in down-regulation of T-lymphocytes proliferation. Alters lipid metabolism by interacting with hepatocellular proteins involved in lipid accumulation and storage. Induces up-regulation of FAS promoter activity, and thereby contributes to the increased triglyceride accumulation in hepatocytes (steatosis). In terms of biological role, forms a heterodimer with envelope glycoprotein E2, which mediates virus attachment to the host cell, virion internalization through clathrin-dependent endocytosis and fusion with host membrane. Fusion with the host cell is most likely mediated by both E1 and E2, through conformational rearrangements of the heterodimer required for fusion rather than a classical class II fusion mechanism. E1/E2 heterodimer binds host apolipoproteins such as APOB and ApoE thereby forming a lipo-viro-particle (LVP). APOE associated to the LVP allows the initial virus attachment to cell surface receptors such as the heparan sulfate proteoglycans (HSPGs), syndecan-1 (SDC1), syndecan-1 (SDC2), the low-density lipoprotein receptor (LDLR) and scavenger receptor class B type I (SCARB1). The cholesterol transfer activity of SCARB1 allows E2 exposure and binding of E2 to SCARB1 and the tetraspanin CD81. E1/E2 heterodimer binding on CD81 activates the epithelial growth factor receptor (EGFR) signaling pathway. Diffusion of the complex E1-E2-EGFR-SCARB1-CD81 to the cell lateral membrane allows further interaction with Claudin 1 (CLDN1) and occludin (OCLN) to finally trigger HCV entry. Forms a heterodimer with envelope glycoprotein E1, which mediates virus attachment to the host cell, virion internalization through clathrin-dependent endocytosis and fusion with host membrane. Fusion with the host cell is most likely mediated by both E1 and E2, through conformational rearrangements of the heterodimer required for fusion rather than a classical class II fusion mechanism. The interaction between envelope glycoprotein E2 and host apolipoprotein E/APOE allows the proper assembly, maturation and infectivity of the viral particles. This interaction is probably promoted via the up-regulation of cellular autophagy by the virus. E1/E2 heterodimer binds host apolipoproteins such as APOB and APOE thereby forming a lipo-viro-particle (LVP). APOE associated to the LVP allows the initial virus attachment to cell surface receptors such as the heparan sulfate proteoglycans (HSPGs), syndecan-1 (SDC1), syndecan-1 (SDC2), the low-density lipoprotein receptor (LDLR) and scavenger receptor class B type I (SCARB1). The cholesterol transfer activity of SCARB1 allows E2 exposure and binding of E2 to SCARB1 and the tetraspanin CD81. E1/E2 heterodimer binding on CD81 activates the epithelial growth factor receptor (EGFR) signaling pathway. Diffusion of the complex E1-E2-EGFR-SCARB1-CD81 to the cell lateral membrane allows further interaction with Claudin 1 (CLDN1) and occludin (OCLN) to finally trigger HCV entry. Inhibits host EIF2AK2/PKR activation, preventing the establishment of an antiviral state. Viral ligand for CD209/DC-SIGN and CLEC4M/DC-SIGNR, which are respectively found on dendritic cells (DCs), and on liver sinusoidal endothelial cells and macrophage-like cells of lymph node sinuses. These interactions allow the capture of circulating HCV particles by these cells and subsequent facilitated transmission to permissive cells such as hepatocytes and lymphocyte subpopulations. The interaction between E2 and host amino acid transporter complex formed by SLC3A2 and SLC7A5/LAT1 may facilitate viral entry into host cell. Its function is as follows. Ion channel protein that acts as a viroporin and plays an essential role in the assembly, envelopment and secretion of viral particles. Regulates the host cell secretory pathway, which induces the intracellular retention of viral glycoproteins and favors assembly of viral particles. Creates a pore in acidic organelles and releases Ca(2+) and H(+) in the cytoplasm of infected cells, leading to a productive viral infection. High levels of cytoplasmic Ca(2+) may trigger membrane trafficking and transport of viral ER-associated proteins to viroplasms, sites of viral genome replication. This ionic imbalance induces the assembly of the inflammasome complex, which triggers the maturation of pro-IL-1beta into IL-1beta through the action of caspase-1. Targets also host mitochondria and induces mitochondrial depolarization. In addition of its role as a viroporin, acts as a lipid raft adhesion factor. Functionally, cysteine protease required for the proteolytic auto-cleavage between the non-structural proteins NS2 and NS3. The N-terminus of NS3 is required for the function of NS2 protease (active region NS2-3). Promotes the initiation of viral particle assembly by mediating the interaction between structural and non-structural proteins. In terms of biological role, displays three enzymatic activities: serine protease with a chymotrypsin-like fold, NTPase and RNA helicase. NS3 serine protease, in association with NS4A, is responsible for the cleavages of NS3-NS4A, NS4A-NS4B, NS4B-NS5A and NS5A-NS5B. The NS3/NS4A complex prevents phosphorylation of host IRF3, thus preventing the establishment of dsRNA induced antiviral state. The NS3/NS4A complex induces host amino acid transporter component SLC3A2, thus contributing to HCV propagation. NS3 RNA helicase binds to RNA and unwinds both dsDNA and dsRNA in the 3' to 5' direction, and likely resolves RNA complicated stable secondary structures in the template strand. Binds a single ATP and catalyzes the unzipping of a single base pair of dsRNA. Inhibits host antiviral proteins TBK1 and IRF3 thereby preventing the establishment of an antiviral state. Cleaves host MAVS/CARDIF thereby preventing the establishment of an antiviral state. Cleaves host TICAM1/TRIF, thereby disrupting TLR3 signaling and preventing the establishment of an antiviral state. Induces a specific membrane alteration that serves as a scaffold for the virus replication complex. This membrane alteration gives rise to the so-called ER-derived membranous web that contains the replication complex. NS4B self-interaction contributes to its function in membranous web formation. Promotes host TRIF protein degradation in a CASP8-dependent manner thereby inhibiting host TLR3-mediated interferon signaling. Disrupts the interaction between STING and TBK1 contributing to the inhibition of interferon signaling. Its function is as follows. Phosphorylated protein that is indispensable for viral replication and assembly. Both hypo- and hyperphosphorylated states are required for the viral life cycle. The hyperphosphorylated form of NS5A is an inhibitor of viral replication. Involved in RNA-binding and especially in binding to the viral genome. Zinc is essential for RNA-binding. Participates in the viral particle production as a result of its interaction with the mature viral core protein. Its interaction with host VAPB may target the viral replication complex to vesicles. Down-regulates viral IRES translation initiation. Mediates interferon resistance, presumably by interacting with and inhibiting host EIF2AK2/PKR. Prevents BIN1-induced apoptosis. Acts as a transcriptional activator of some host genes important for viral replication when localized in the nucleus. Via the interaction with host PACSIN2, modulates lipid droplet formation in order to promote virion assembly. Modulates TNFRSF21/DR6 signaling pathway for viral propagation. Functionally, RNA-dependent RNA polymerase that performs primer-template recognition and RNA synthesis during viral replication. Initiates RNA transcription/replication at a flavin adenine dinucleotide (FAD), resulting in a 5'- FAD cap on viral RNAs. In this way, recognition of viral 5' RNA by host pattern recognition receptors can be bypassed, thereby evading activation of antiviral pathways. This is Genome polyprotein from Hepatitis C virus genotype 5a (isolate EUH1480) (HCV).